Here is a 591-residue protein sequence, read N- to C-terminus: Aspartate--tRNA ligase (591 aa).

E176 is a binding site for L-aspartate. Residues 200–203 (QILK) are aspartate. R222 is an L-aspartate binding site. ATP is bound by residues 222 to 224 (RDE) and Q231. Residue H450 participates in L-aspartate binding. E484 provides a ligand contact to ATP. R491 provides a ligand contact to L-aspartate. 536 to 539 (GLDR) serves as a coordination point for ATP.

This sequence belongs to the class-II aminoacyl-tRNA synthetase family. Type 1 subfamily. In terms of assembly, homodimer.

The protein resides in the cytoplasm. The catalysed reaction is tRNA(Asp) + L-aspartate + ATP = L-aspartyl-tRNA(Asp) + AMP + diphosphate. Catalyzes the attachment of L-aspartate to tRNA(Asp) in a two-step reaction: L-aspartate is first activated by ATP to form Asp-AMP and then transferred to the acceptor end of tRNA(Asp). The sequence is that of Aspartate--tRNA ligase from Listeria monocytogenes serotype 4a (strain HCC23).